The sequence spans 358 residues: 3-isopropylmalate dehydrogenase (358 aa).

Residues R92, R102, R130, and D224 each coordinate substrate. 3 residues coordinate Mg(2+): D224, D248, and D252. Residue 282-294 (GSAPDIAGQGIAN) coordinates NAD(+).

This sequence belongs to the isocitrate and isopropylmalate dehydrogenases family. LeuB type 1 subfamily. As to quaternary structure, homodimer. Requires Mg(2+) as cofactor. It depends on Mn(2+) as a cofactor.

It is found in the cytoplasm. It catalyses the reaction (2R,3S)-3-isopropylmalate + NAD(+) = 4-methyl-2-oxopentanoate + CO2 + NADH. The protein operates within amino-acid biosynthesis; L-leucine biosynthesis; L-leucine from 3-methyl-2-oxobutanoate: step 3/4. Catalyzes the oxidation of 3-carboxy-2-hydroxy-4-methylpentanoate (3-isopropylmalate) to 3-carboxy-4-methyl-2-oxopentanoate. The product decarboxylates to 4-methyl-2 oxopentanoate. The protein is 3-isopropylmalate dehydrogenase of Bordetella pertussis (strain Tohama I / ATCC BAA-589 / NCTC 13251).